Consider the following 148-residue polypeptide: Cystatin-C (148 aa).

A signal peptide spans 1–28 (MARSLGVPLLLLAALVVALALAVSPAAG). Residues 83–87 (QIVSG) carry the Secondary area of contact motif. 2 disulfides stabilise this stretch: C101/C111 and C125/C145.

It belongs to the cystatin family.

It is found in the secreted. In terms of biological role, this is a thiol proteinase inhibitor. The polypeptide is Cystatin-C (CST3) (Oryctolagus cuniculus (Rabbit)).